Reading from the N-terminus, the 714-residue chain is Fatty acid oxidation complex subunit alpha (714 aa).

Positions 1–190 (MDTVSAFKLE…KAGLVDEVVP (190 aa)) are enoyl-CoA hydratase. A 3-hydroxyacyl-CoA dehydrogenase region spans residues 306 to 714 (GSLRSVAVLG…TFWPADERLT (409 aa)).

This sequence in the N-terminal section; belongs to the enoyl-CoA hydratase/isomerase family. It in the central section; belongs to the 3-hydroxyacyl-CoA dehydrogenase family. As to quaternary structure, heterotetramer of two alpha chains (FadJ) and two beta chains (FadI).

The protein localises to the cytoplasm. It catalyses the reaction a (3S)-3-hydroxyacyl-CoA = a (2E)-enoyl-CoA + H2O. It carries out the reaction a 4-saturated-(3S)-3-hydroxyacyl-CoA = a (3E)-enoyl-CoA + H2O. The catalysed reaction is a (3S)-3-hydroxyacyl-CoA + NAD(+) = a 3-oxoacyl-CoA + NADH + H(+). The enzyme catalyses (3S)-3-hydroxybutanoyl-CoA = (3R)-3-hydroxybutanoyl-CoA. The protein operates within lipid metabolism; fatty acid beta-oxidation. Its function is as follows. Catalyzes the formation of a hydroxyacyl-CoA by addition of water on enoyl-CoA. Also exhibits 3-hydroxyacyl-CoA epimerase and 3-hydroxyacyl-CoA dehydrogenase activities. This is Fatty acid oxidation complex subunit alpha from Klebsiella pneumoniae subsp. pneumoniae (strain ATCC 700721 / MGH 78578).